The following is a 616-amino-acid chain: Chaperone protein HscA (616 aa).

It belongs to the heat shock protein 70 family.

Functionally, chaperone involved in the maturation of iron-sulfur cluster-containing proteins. Has a low intrinsic ATPase activity which is markedly stimulated by HscB. Involved in the maturation of IscU. This is Chaperone protein HscA from Klebsiella pneumoniae (strain 342).